Here is a 306-residue protein sequence, read N- to C-terminus: Glycine--tRNA ligase alpha subunit (306 aa).

This sequence belongs to the class-II aminoacyl-tRNA synthetase family. In terms of assembly, tetramer of two alpha and two beta subunits.

It localises to the cytoplasm. It carries out the reaction tRNA(Gly) + glycine + ATP = glycyl-tRNA(Gly) + AMP + diphosphate. This chain is Glycine--tRNA ligase alpha subunit, found in Aliivibrio fischeri (strain ATCC 700601 / ES114) (Vibrio fischeri).